The primary structure comprises 521 residues: 4-cresol dehydrogenase [hydroxylating] flavoprotein subunit (521 aa).

The 215-residue stretch at 54 to 268 (AAHAPSAAVT…VEIVDALRPL (215 aa)) folds into the FAD-binding PCMH-type domain. Tyr-384 carries the post-translational modification O-8alpha-FAD tyrosine.

As to quaternary structure, tetramer of two cytochrome subunits and two flavoprotein subunits. It depends on FAD as a cofactor.

It carries out the reaction 4-methylphenol + 4 oxidized [azurin] + H2O = 4 reduced [azurin] + 4-hydroxybenzaldehyde + 4 H(+). The protein operates within aromatic compound metabolism; p-cresol degradation. In terms of biological role, catalyzes the azurin dependent hydroxylation of the methyl group of 4-methylphenol to form 4-hydroxybenzaldehyde. In Pseudomonas putida (Arthrobacter siderocapsulatus), this protein is 4-cresol dehydrogenase [hydroxylating] flavoprotein subunit (pchF).